A 317-amino-acid chain; its full sequence is Probable cell division protein WhiA (317 aa).

Residues 276–310 (TLKELGEMVSGGKISKSGINHRLRKIDDIAEKLRA) constitute a DNA-binding region (H-T-H motif).

This sequence belongs to the WhiA family.

Functionally, involved in cell division and chromosome segregation. This Bacillus thuringiensis (strain Al Hakam) protein is Probable cell division protein WhiA.